The primary structure comprises 718 residues: Gephyrin (718 aa).

Residues 1-19 show a composition bias toward polar residues; the sequence is MSNTLTTERNITNSPTAAQ. The interval 1–26 is disordered; it reads MSNTLTTERNITNSPTAAQLNEKESG. Residues 31-176 form an MPT Mo-transferase region; that stretch reads EWIVGVLTTS…LPGSVKAIRE (146 aa). Low complexity predominate over residues 222-244; the sequence is NQNNQNNNNNNNNNNNNNNNNNS. Disordered regions lie at residues 222–266 and 344–364; these read NQNN…SSYN and TGENLIPPQPQQPTNSINDDD. Basic residues predominate over residues 245 to 254; it reads HNHHHHHHHS. The interval 260 to 718 is MPT adenylyltransferase; the sequence is KRGSSYNMTP…KAILIGPINN (459 aa).

The protein in the N-terminal section; belongs to the MoaB/Mog family. In the C-terminal section; belongs to the MoeA family. In terms of assembly, homotrimer, homodimer and homooligomer. Requires Mg(2+) as cofactor.

The protein resides in the cell membrane. The protein localises to the cytoplasm. It localises to the cytosol. It is found in the cytoskeleton. The catalysed reaction is molybdopterin + ATP + H(+) = adenylyl-molybdopterin + diphosphate. It carries out the reaction adenylyl-molybdopterin + molybdate = Mo-molybdopterin + AMP + H(+). It functions in the pathway cofactor biosynthesis; molybdopterin biosynthesis. Its function is as follows. Microtubule-associated protein involved in membrane protein-cytoskeleton interactions. Also has a catalytic activity and catalyzes two steps in the biosynthesis of the molybdenum cofactor. In the first step, molybdopterin is adenylated. Subsequently, molybdate is inserted into adenylated molybdopterin and AMP is released. In Dictyostelium discoideum (Social amoeba), this protein is Gephyrin (gphn).